The primary structure comprises 558 residues: Arginine--tRNA ligase (558 aa).

Positions proline 119 to histidine 129 match the 'HIGH' region motif.

The protein belongs to the class-I aminoacyl-tRNA synthetase family. Monomer.

It localises to the cytoplasm. The catalysed reaction is tRNA(Arg) + L-arginine + ATP = L-arginyl-tRNA(Arg) + AMP + diphosphate. The sequence is that of Arginine--tRNA ligase from Lactobacillus johnsonii (strain CNCM I-12250 / La1 / NCC 533).